The following is a 622-amino-acid chain: Fanconi anemia group G protein (622 aa).

Ser-7 carries the post-translational modification Phosphoserine. 4 TPR repeats span residues Val-246–Trp-279, Ser-344–Ser-377, Ser-453–Ala-486, and Ala-514–Asn-547.

In terms of assembly, belongs to the multisubunit FA complex composed of FANCA, FANCB, FANCC, FANCE, FANCF, FANCG, FANCL/PHF9 and FANCM. The complex is not found in FA patients. In complex with FANCF, FANCA and FANCL, but not with FANCC, nor FANCE, interacts with HES1; this interaction may be essential for the stability and nuclear localization of FA core complex proteins. The complex with FANCC and FANCG may also include EIF2AK2 and HSP70. When phosphorylated at Ser-7, forms a complex with BRCA2, FANCD2 and XRCC3. As to expression, highly expressed in testis and thymus. Found in lymphoblasts.

The protein localises to the nucleus. It localises to the cytoplasm. Functionally, DNA repair protein that may operate in a postreplication repair or a cell cycle checkpoint function. May be implicated in interstrand DNA cross-link repair and in the maintenance of normal chromosome stability. Candidate tumor suppressor gene. The polypeptide is Fanconi anemia group G protein (FANCG) (Homo sapiens (Human)).